A 161-amino-acid chain; its full sequence is Globin CTT-IX (161 aa).

The signal sequence occupies residues Met-1–Ala-16. In terms of domain architecture, Globin spans Pro-18–Leu-161. 2 residues coordinate heme b: His-76 and His-111.

Belongs to the globin family. As to quaternary structure, homodimer.

The protein is Globin CTT-IX (CTT-9) of Chironomus thummi thummi (Midge).